A 258-amino-acid polypeptide reads, in one-letter code: MILNGKTRAGKPGFPWLVFLHGFSGDSREWQDVGAQLPDYPQLHLDLPGHGDSANIAVAGFDEVSQLLADTLVSYNILKFWLVGYSLGGRIAMFHACQHPAGLIGLIVEGGHPGLHDEPTRKARAESDAQWAERFRREPLENVFSAWYQQPVFAALQETERDALVALRSQNNGAALGAMLQATSLAQQPDLRAALRAHDYPFHYVYGEHDDKFGAIATELTAQRHVIPNAGHNAHRENPAAVAACLAQILRLRIKDIP.

It belongs to the AB hydrolase superfamily. MenH family. In terms of assembly, monomer.

It catalyses the reaction 5-enolpyruvoyl-6-hydroxy-2-succinyl-cyclohex-3-ene-1-carboxylate = (1R,6R)-6-hydroxy-2-succinyl-cyclohexa-2,4-diene-1-carboxylate + pyruvate. It participates in quinol/quinone metabolism; 1,4-dihydroxy-2-naphthoate biosynthesis; 1,4-dihydroxy-2-naphthoate from chorismate: step 3/7. The protein operates within quinol/quinone metabolism; menaquinone biosynthesis. Functionally, catalyzes a proton abstraction reaction that results in 2,5-elimination of pyruvate from 2-succinyl-5-enolpyruvyl-6-hydroxy-3-cyclohexene-1-carboxylate (SEPHCHC) and the formation of 2-succinyl-6-hydroxy-2,4-cyclohexadiene-1-carboxylate (SHCHC). The sequence is that of 2-succinyl-6-hydroxy-2,4-cyclohexadiene-1-carboxylate synthase from Enterobacter sp. (strain 638).